The primary structure comprises 232 residues: Large ribosomal subunit protein uL1 (232 aa).

Belongs to the universal ribosomal protein uL1 family. In terms of assembly, part of the 50S ribosomal subunit.

Binds directly to 23S rRNA. The L1 stalk is quite mobile in the ribosome, and is involved in E site tRNA release. Functionally, protein L1 is also a translational repressor protein, it controls the translation of the L11 operon by binding to its mRNA. This Bacteroides fragilis (strain ATCC 25285 / DSM 2151 / CCUG 4856 / JCM 11019 / LMG 10263 / NCTC 9343 / Onslow / VPI 2553 / EN-2) protein is Large ribosomal subunit protein uL1.